The chain runs to 508 residues: Photosystem II CP47 reaction center protein (508 aa).

Helical transmembrane passes span 21 to 36 (SVHI…WAGS), 101 to 115 (IMFS…IWHW), 140 to 156 (GIHL…FGAF), 203 to 218 (IAAG…FHLS), 237 to 252 (VLSS…AFVV), and 457 to 472 (SFAL…HGAR).

It belongs to the PsbB/PsbC family. PsbB subfamily. In terms of assembly, PSII is composed of 1 copy each of membrane proteins PsbA, PsbB, PsbC, PsbD, PsbE, PsbF, PsbH, PsbI, PsbJ, PsbK, PsbL, PsbM, PsbT, PsbX, PsbY, PsbZ, Psb30/Ycf12, at least 3 peripheral proteins of the oxygen-evolving complex and a large number of cofactors. It forms dimeric complexes. Binds multiple chlorophylls. PSII binds additional chlorophylls, carotenoids and specific lipids. serves as cofactor.

The protein resides in the plastid. Its subcellular location is the chloroplast thylakoid membrane. Functionally, one of the components of the core complex of photosystem II (PSII). It binds chlorophyll and helps catalyze the primary light-induced photochemical processes of PSII. PSII is a light-driven water:plastoquinone oxidoreductase, using light energy to abstract electrons from H(2)O, generating O(2) and a proton gradient subsequently used for ATP formation. The polypeptide is Photosystem II CP47 reaction center protein (Ceratophyllum demersum (Rigid hornwort)).